The sequence spans 252 residues: Uridylate kinase (252 aa).

27–30 contributes to the ATP binding site; the sequence is KLGG. Residue Gly68 participates in UMP binding. Residues Gly69 and Arg73 each contribute to the ATP site. UMP-binding positions include Asp88 and 149–156; that span reads MGLPYFST. Tyr182 and Asp185 together coordinate ATP.

The protein belongs to the UMP kinase family. As to quaternary structure, homohexamer.

It localises to the cytoplasm. It catalyses the reaction UMP + ATP = UDP + ADP. Its pathway is pyrimidine metabolism; CTP biosynthesis via de novo pathway; UDP from UMP (UMPK route): step 1/1. Its activity is regulated as follows. Inhibited by UTP. Its function is as follows. Catalyzes the reversible phosphorylation of UMP to UDP. The chain is Uridylate kinase from Mycobacterium sp. (strain JLS).